Here is a 540-residue protein sequence, read N- to C-terminus: IQ motif and ankyrin repeat domain-containing protein 1 (540 aa).

The span at 1–17 (MSTKKGGPKAASGKGQA) shows a compositional bias: low complexity. The disordered stretch occupies residues 1-62 (MSTKKGGPKA…PQAPAAPTAE (62 aa)). The IQ domain maps to 62–91 (EDKAAIVIQCAFRQYLARRELARRCQERQE). ANK repeat units lie at residues 191–220 (HGNT…NPNT) and 224–253 (FGRT…DPRM). Positions 281–388 (LTEAMLKNME…EETLAMARLE (108 aa)) form a coiled coil.

This chain is IQ motif and ankyrin repeat domain-containing protein 1, found in Mus musculus (Mouse).